The sequence spans 452 residues: AP-4 complex subunit mu-1 (452 aa).

The MHD domain maps to 184 to 451 (KNEVFLDVVE…LSHSDAYVIR (268 aa)).

The protein belongs to the adaptor complexes medium subunit family. Adaptor protein complex 4 (AP-4) is a heterotetramer composed of two large adaptins (epsilon-type subunit AP4E1 and beta-type subunit AP4B1), a medium adaptin (mu-type subunit AP4M1) and a small adaptin (sigma-type AP4S1). Interacts with tyrosine-based sorting signals on the cytoplasmic tail of cargo proteins such as APP, ATG9A, LAMP2 and NAGPA. Interacts with the C-terminal domain of GRID2. Interacts with GRIA1 and GRIA2; the interaction is indirect via CACNG3. Interacts with CACNG3; CACNG3 associates GRIA1 and GRIA2 with the adaptor protein complex 4 (AP-4) to target them to the somatodendritic compartment of neurons. Interacts with HOOK1 and HOOK2; the interactions are direct, mediate the interaction between FTS-Hook-FHIP (FHF) complex and AP-4 and the perinuclear distribution of AP-4.

Its subcellular location is the golgi apparatus. The protein resides in the trans-Golgi network membrane. It localises to the early endosome. In terms of biological role, component of the adaptor protein complex 4 (AP-4). Adaptor protein complexes are vesicle coat components involved both in vesicle formation and cargo selection. They control the vesicular transport of proteins in different trafficking pathways. AP-4 forms a non clathrin-associated coat on vesicles departing the trans-Golgi network (TGN) and may be involved in the targeting of proteins from the trans-Golgi network (TGN) to the endosomal-lysosomal system. It is also involved in protein sorting to the basolateral membrane in epithelial cells and the proper asymmetric localization of somatodendritic proteins in neurons. Within AP-4, the mu-type subunit AP4M1 is directly involved in the recognition and binding of tyrosine-based sorting signals found in the cytoplasmic part of cargos. The adaptor protein complex 4 (AP-4) may also recognize other types of sorting signal. This Bos taurus (Bovine) protein is AP-4 complex subunit mu-1.